Here is a 74-residue protein sequence, read N- to C-terminus: Cold shock-like protein CspD (74 aa).

The CSD domain maps to 4–64; it reads GTVKWFNNAK…GPKGNHASVI (61 aa).

As to quaternary structure, homodimer.

It localises to the cytoplasm. Functionally, inhibits DNA replication at both initiation and elongation steps, most probably by binding to the opened, single-stranded regions at replication forks. Plays a regulatory role in chromosomal replication in nutrient-depleted cells. The chain is Cold shock-like protein CspD (cspD) from Escherichia coli O157:H7.